Consider the following 192-residue polypeptide: Phage-like element PBSX protein XkdU (192 aa).

It to B.subtilis YqcA.

In Bacillus subtilis (strain 168), this protein is Phage-like element PBSX protein XkdU (xkdU).